A 93-amino-acid polypeptide reads, in one-letter code: MYKLEKAQAKQVVGGLSFWTFSAGLIMIVNALTGVAHAVNDIFQSTTANANGSDDDNENKNNSYRSKSNYFNTARFKLGLTPGSSSYSFPVFS.

A helical membrane pass occupies residues 12–32 (VVGGLSFWTFSAGLIMIVNAL). The tract at residues 47–66 (TANANGSDDDNENKNNSYRS) is disordered.

The protein localises to the cell membrane. This is an uncharacterized protein from Mycoplasma genitalium (strain ATCC 33530 / DSM 19775 / NCTC 10195 / G37) (Mycoplasmoides genitalium).